The sequence spans 260 residues: Circadian clock-controlled protein daywake (260 aa).

An N-terminal signal peptide occupies residues 1–25 (MQLTSASVCLLWMGLLSWVSHRIDA).

Belongs to the TO family.

Its function is as follows. Component of the circadian clock or downstream effector of clock function. Required for suppressing daytime sleep (siesta) under ambient environmental temperatures. Part of a heat avoidance mechanism that modulates daytime sleep behavior under different environmental temperatures to minimize the risk of heat exposure. Under cooler ambient temperatures, suppresses daytime sleep (siesta) and thus allows for longer periods of daytime activity. In Drosophila yakuba (Fruit fly), this protein is Circadian clock-controlled protein daywake.